A 117-amino-acid chain; its full sequence is MSNIIKQLEQEQMKQDVPSFRPGDSVEVKVWVVEGAKKRLQAFEGVVIAIRNRGLHSAFTVRKVSNGEGVERVFQTHSPVVDSINVKRRGAVRRAKLYYLRERSGKAARIKERLNSK.

This sequence belongs to the bacterial ribosomal protein bL19 family.

Functionally, this protein is located at the 30S-50S ribosomal subunit interface and may play a role in the structure and function of the aminoacyl-tRNA binding site. The chain is Large ribosomal subunit protein bL19 from Photorhabdus laumondii subsp. laumondii (strain DSM 15139 / CIP 105565 / TT01) (Photorhabdus luminescens subsp. laumondii).